The sequence spans 115 residues: Large ribosomal subunit protein bL19 (115 aa).

This sequence belongs to the bacterial ribosomal protein bL19 family.

In terms of biological role, this protein is located at the 30S-50S ribosomal subunit interface and may play a role in the structure and function of the aminoacyl-tRNA binding site. This is Large ribosomal subunit protein bL19 from Francisella tularensis subsp. mediasiatica (strain FSC147).